A 961-amino-acid polypeptide reads, in one-letter code: ATPase 7, plasma membrane-type (961 aa).

At 1 to 64 (MTDIEALKAI…EKKESKILKF (64 aa)) the chain is on the cytoplasmic side. A helical transmembrane segment spans residues 65–84 (LGFMWNPLSWVMEAAALMAI). The Extracellular segment spans residues 85 to 96 (GLAHGGGKPADY). A helical membrane pass occupies residues 97–117 (HDFVGIVVLLLINSTISFVEE). At 118–246 (NNAGNAAAAL…GHFQKVLTAI (129 aa)) the chain is on the cytoplasmic side. The chain crosses the membrane as a helical span at residues 247–267 (GNFCICSIAVGMAIEIVVIYG). At 268–276 (LQKRGYRVG) the chain is on the extracellular side. Residues 277 to 294 (IDNLLVLLIGGIPIAMPT) form a helical membrane-spanning segment. Topologically, residues 295–643 (VLSVTMAIGA…TSRAIFQRMK (349 aa)) are cytoplasmic. Asp332 functions as the 4-aspartylphosphate intermediate in the catalytic mechanism. Residues Asp588 and Asp592 each contribute to the Mg(2+) site. The helical transmembrane segment at 644–665 (NYTIYAVSITIRIVMGFMLLCV) threads the bilayer. The Extracellular portion of the chain corresponds to 666 to 670 (FWEFD). The helical transmembrane segment at 671–693 (FPPFMVLVIAILNDGTIMTISKD) threads the bilayer. The Cytoplasmic portion of the chain corresponds to 694 to 709 (RVKPSPTPDCWKLKEI). A helical transmembrane segment spans residues 710 to 730 (FATGVVLGAYLAIMTVVFFWA). The Extracellular portion of the chain corresponds to 731 to 764 (AYETNFFHNIFHVRNFNQHHFKMKDKKVAAHLNE). The chain crosses the membrane as a helical span at residues 765-785 (QMASAVYLQVSTISQALIFVT). The Cytoplasmic segment spans residues 786–797 (RSRSWSFVERPG). The helical transmembrane segment at 798 to 818 (FLLVIAFLIAQLVASVISAMA) threads the bilayer. Residues 819 to 826 (NWPFAGIR) are Extracellular-facing. The chain crosses the membrane as a helical span at residues 827-847 (SIGWGWTGVIWIFNIVTYMLL). Residues 848 to 961 (DPIKFLVRYA…EDPNSNNYTI (114 aa)) are Cytoplasmic-facing. Thr894 is modified (phosphothreonine). 2 positions are modified to phosphoserine: Ser910 and Ser942. The segment at 959 to 961 (YTI) is interaction with 14-3-3 proteins. Thr960 is subject to Phosphothreonine.

Belongs to the cation transport ATPase (P-type) (TC 3.A.3) family. Type IIIA subfamily. As to quaternary structure, binds to 14-3-3 proteins. The binding is induced by phosphorylation of Thr-960. Binding to 14-3-3 proteins activates the H(+)-ATPase. In terms of tissue distribution, expressed in guard cells, roots and leaves, and barely in mesophyll cells.

The protein resides in the membrane. The catalysed reaction is ATP + H2O + H(+)(in) = ADP + phosphate + 2 H(+)(out). In terms of biological role, the plasma membrane H(+) ATPase of plants and fungi generates a proton gradient that drives the active transport of nutrients by H(+)-symport. The resulting external acidification and/or internal alkinization may mediate growth responses. The protein is ATPase 7, plasma membrane-type (AHA7) of Arabidopsis thaliana (Mouse-ear cress).